We begin with the raw amino-acid sequence, 249 residues long: Aspartate/glutamate leucyltransferase (249 aa).

The protein belongs to the R-transferase family. Bpt subfamily.

The protein resides in the cytoplasm. The enzyme catalyses N-terminal L-glutamyl-[protein] + L-leucyl-tRNA(Leu) = N-terminal L-leucyl-L-glutamyl-[protein] + tRNA(Leu) + H(+). The catalysed reaction is N-terminal L-aspartyl-[protein] + L-leucyl-tRNA(Leu) = N-terminal L-leucyl-L-aspartyl-[protein] + tRNA(Leu) + H(+). Functions in the N-end rule pathway of protein degradation where it conjugates Leu from its aminoacyl-tRNA to the N-termini of proteins containing an N-terminal aspartate or glutamate. In Xanthobacter autotrophicus (strain ATCC BAA-1158 / Py2), this protein is Aspartate/glutamate leucyltransferase.